Consider the following 344-residue polypeptide: Olfactory receptor class A-like protein 4 (344 aa).

At Met-1–Val-10 the chain is on the extracellular side. A helical membrane pass occupies residues Leu-11–Phe-31. Over Asp-32 to Thr-47 the chain is Cytoplasmic. A helical transmembrane segment spans residues Ile-48–Phe-68. The Extracellular portion of the chain corresponds to Val-69–Arg-84. A disulfide bridge links Cys-83 with Cys-169. Residues Val-85–Ser-105 traverse the membrane as a helical segment. Residues Ala-106 to Arg-130 are Cytoplasmic-facing. Residues Val-131–Val-151 form a helical membrane-spanning segment. At Tyr-152–Gln-186 the chain is on the extracellular side. Residue Asn-159 is glycosylated (N-linked (GlcNAc...) asparagine). Residues Gly-187–Val-207 traverse the membrane as a helical segment. The Cytoplasmic segment spans residues Gly-208–His-246. Residues Val-247–Thr-267 form a helical membrane-spanning segment. The Extracellular portion of the chain corresponds to Tyr-268–Gly-279. A helical transmembrane segment spans residues Leu-280–Ala-300. At Leu-301–Lys-344 the chain is on the cytoplasmic side. The span at Thr-324 to Arg-337 shows a compositional bias: basic and acidic residues. The tract at residues Thr-324–Lys-344 is disordered.

It belongs to the G-protein coupled receptor 1 family. Highly expressed in the olfactory rosette. Specifically localizes to crypt neurons in the olfactory neuroepithelium. Colocalizes with the inhibitory G-protein gnaia in crypt neurons. Not detected in other tissues tested.

The protein resides in the cell membrane. Probable olfactory receptor. This Danio rerio (Zebrafish) protein is Olfactory receptor class A-like protein 4 (ora4).